The primary structure comprises 324 residues: Probable acrylyl-CoA reductase AcuI (324 aa).

Residues Tyr-41, 156-159, 178-180, Arg-198, Leu-242, Ile-256, Ser-267, and Asn-313 each bind NADP(+); these read SGGV and SGR.

This sequence belongs to the zinc-containing alcohol dehydrogenase family. Acrylyl-CoA reductase subfamily. In terms of assembly, homodimer.

Its subcellular location is the cytoplasm. The enzyme catalyses propanoyl-CoA + NADP(+) = acryloyl-CoA + NADPH + H(+). Its function is as follows. Probably catalyzes the NADPH-dependent reduction of acrylyl-CoA to propanoyl-CoA. This is Probable acrylyl-CoA reductase AcuI (acuI) from Escherichia coli (strain K12).